Reading from the N-terminus, the 90-residue chain is Small ribosomal subunit protein bS20 (90 aa).

Residues 1-15 (MANHKSAQKRIRQTK) are compositionally biased toward basic residues. Residues 1 to 22 (MANHKSAQKRIRQTKTRTERNR) are disordered.

The protein belongs to the bacterial ribosomal protein bS20 family.

In terms of biological role, binds directly to 16S ribosomal RNA. The protein is Small ribosomal subunit protein bS20 of Helicobacter hepaticus (strain ATCC 51449 / 3B1).